Consider the following 179-residue polypeptide: MKQFLDFLPLVVFFAFYKLYDIYAATSALIVATAIVLIYSWVRYRKIEKMALITFVLVAVFGGLTLFFHNDEFIKWKVTVIYALFAGALLISQWVMKKPLIQRMLGKELALPQQVWSKLNLAWALFFIVCGLANIYIAFWLPQNIWVNFKVFGLTALTLIFTLLSGVYIYRHLPQEDKS.

5 helical membrane passes run 22–42 (IYAA…YSWV), 50–70 (MALI…FFHN), 76–96 (WKVT…QWVM), 121–141 (LAWA…AFWL), and 149–169 (FKVF…GVYI).

Belongs to the YciB family.

The protein resides in the cell inner membrane. Functionally, plays a role in cell envelope biogenesis, maintenance of cell envelope integrity and membrane homeostasis. The protein is Inner membrane-spanning protein YciB of Salmonella dublin (strain CT_02021853).